The primary structure comprises 827 residues: Leucine--tRNA ligase (827 aa).

The 'HIGH' region motif lies at 46–56 (PYPSGRIHMGH). A 'KMSKS' region motif is present at residues 585–589 (KMSKS). ATP is bound at residue lysine 588.

This sequence belongs to the class-I aminoacyl-tRNA synthetase family.

The protein resides in the cytoplasm. The catalysed reaction is tRNA(Leu) + L-leucine + ATP = L-leucyl-tRNA(Leu) + AMP + diphosphate. In Desulfotalea psychrophila (strain LSv54 / DSM 12343), this protein is Leucine--tRNA ligase.